Consider the following 35-residue polypeptide: Thionin NsW1 (35 aa).

3 cysteine pairs are disulfide-bonded: cysteine 4–cysteine 32, cysteine 12–cysteine 30, and cysteine 16–cysteine 26.

Contains 4 disulfide bonds.

It localises to the secreted. Functionally, antimicrobial peptide disrupting membranes. Has antibacterial against Gram-positive bacteria S.aureus (MIC=6.5 uM) and B.subtilis (MIC=3.25 uM) but not against Gram-negative bacterium E.coli. Has antifungal activity against C.albicans (MIC=1.63 uM). The chain is Thionin NsW1 from Nigella sativa (Black cumin).